The sequence spans 384 residues: Dual specificity protein phosphatase 9 (384 aa).

Residue serine 16 is modified to Phosphoserine. In terms of domain architecture, Rhodanese spans 18–139 (PRPRLLLLDC…FQAECPHLCE (122 aa)). Residues 203-346 (FPVQILPNLY…LLDFERSLRL (144 aa)) form the Tyrosine-protein phosphatase domain. The residue at position 262 (serine 262) is a Phosphoserine. The Phosphocysteine intermediate role is filled by cysteine 290. The tract at residues 348–384 (ERHSQEQGSGGQASAASNPPSFFTTPTSDGAFELAPT) is disordered. Residue serine 351 is modified to Phosphoserine. Residues 359–375 (QASAASNPPSFFTTPTS) show a composition bias toward polar residues.

It belongs to the protein-tyrosine phosphatase family. Non-receptor class dual specificity subfamily.

Its subcellular location is the cytoplasm. It catalyses the reaction O-phospho-L-tyrosyl-[protein] + H2O = L-tyrosyl-[protein] + phosphate. The catalysed reaction is O-phospho-L-seryl-[protein] + H2O = L-seryl-[protein] + phosphate. It carries out the reaction O-phospho-L-threonyl-[protein] + H2O = L-threonyl-[protein] + phosphate. Its function is as follows. Inactivates MAP kinases. Has a specificity for the ERK family. In Homo sapiens (Human), this protein is Dual specificity protein phosphatase 9 (DUSP9).